The primary structure comprises 413 residues: Multifunctional CCA protein (413 aa).

ATP contacts are provided by G8 and R11. CTP-binding residues include G8 and R11. Mg(2+) contacts are provided by D21 and D23. ATP contacts are provided by R91, R141, and R144. 3 residues coordinate CTP: R91, R141, and R144. The HD domain occupies T230–L331.

This sequence belongs to the tRNA nucleotidyltransferase/poly(A) polymerase family. Bacterial CCA-adding enzyme type 1 subfamily. As to quaternary structure, monomer. Can also form homodimers and oligomers. Requires Mg(2+) as cofactor. Ni(2+) serves as cofactor.

It catalyses the reaction a tRNA precursor + 2 CTP + ATP = a tRNA with a 3' CCA end + 3 diphosphate. The enzyme catalyses a tRNA with a 3' CCA end + 2 CTP + ATP = a tRNA with a 3' CCACCA end + 3 diphosphate. Its function is as follows. Catalyzes the addition and repair of the essential 3'-terminal CCA sequence in tRNAs without using a nucleic acid template. Adds these three nucleotides in the order of C, C, and A to the tRNA nucleotide-73, using CTP and ATP as substrates and producing inorganic pyrophosphate. tRNA 3'-terminal CCA addition is required both for tRNA processing and repair. Also involved in tRNA surveillance by mediating tandem CCA addition to generate a CCACCA at the 3' terminus of unstable tRNAs. While stable tRNAs receive only 3'-terminal CCA, unstable tRNAs are marked with CCACCA and rapidly degraded. The protein is Multifunctional CCA protein of Verminephrobacter eiseniae (strain EF01-2).